A 253-amino-acid polypeptide reads, in one-letter code: LexA repressor (253 aa).

Positions 1 to 34 (MAIEKKPAGARGSRGSRTVKTLPNGKPDPASLSD) are disordered. The H-T-H motif DNA-binding region spans 56–76 (IREIGDAAGLQSTSSVAYQLK). Positions 82–106 (GFLRRDPNKPRAVDVRHLPETESRS) are enriched in basic and acidic residues. The segment at 82–127 (GFLRRDPNKPRAVDVRHLPETESRSSKAATQAKSKAPQAGAHDPEL) is disordered. Residues 107 to 120 (SKAATQAKSKAPQA) show a composition bias toward low complexity. Catalysis depends on for autocatalytic cleavage activity residues Ser177 and Lys214.

This sequence belongs to the peptidase S24 family. In terms of assembly, homodimer.

It catalyses the reaction Hydrolysis of Ala-|-Gly bond in repressor LexA.. In terms of biological role, represses a number of genes involved in the response to DNA damage (SOS response), including recA and lexA. In the presence of single-stranded DNA, RecA interacts with LexA causing an autocatalytic cleavage which disrupts the DNA-binding part of LexA, leading to derepression of the SOS regulon and eventually DNA repair. This chain is LexA repressor, found in Corynebacterium glutamicum (strain R).